The following is a 911-amino-acid chain: Nitrate reductase [NADH], clone PBNBR1405 (911 aa).

Residues 1-68 (MATSVDNRHY…RFDSSDDEDE (68 aa)) are disordered. The segment covering 49 to 62 (KSVDKTTKEDRFDS) has biased composition (basic and acidic residues). Cys191 serves as a coordination point for Mo-molybdopterin. The 76-residue stretch at 539 to 614 (SKMYSMSEVR…LEDYRIGELI (76 aa)) folds into the Cytochrome b5 heme-binding domain. Heme-binding residues include His574 and His597. The 113-residue stretch at 654-766 (REKVPVKLIE…KGPLGHIEYQ (113 aa)) folds into the FAD-binding FR-type domain. FAD is bound by residues 706-709 (RAYT), 723-727 (VIKVY), Phe728, Phe735, 740-742 (LMS), and Thr793.

Belongs to the nitrate reductase family. Homodimer. The cofactor is FAD. Heme serves as cofactor. It depends on Mo-molybdopterin as a cofactor.

The catalysed reaction is nitrite + NAD(+) + H2O = nitrate + NADH + H(+). Its function is as follows. Nitrate reductase is a key enzyme involved in the first step of nitrate assimilation in plants, fungi and bacteria. The protein is Nitrate reductase [NADH], clone PBNBR1405 (NIA1) of Brassica napus (Rape).